The primary structure comprises 438 residues: Xylose isomerase (438 aa).

Active-site residues include histidine 100 and aspartate 103. Mg(2+) is bound by residues glutamate 231, glutamate 267, histidine 270, aspartate 295, aspartate 306, aspartate 308, and aspartate 338.

The protein belongs to the xylose isomerase family. In terms of assembly, homotetramer. It depends on Mg(2+) as a cofactor.

It is found in the cytoplasm. The enzyme catalyses alpha-D-xylose = alpha-D-xylulofuranose. The protein is Xylose isomerase of Pseudomonas syringae pv. syringae (strain B728a).